Reading from the N-terminus, the 440-residue chain is Xaa-Pro dipeptidase (440 aa).

Residues D241, D252, H333, E378, and E417 each coordinate Mn(2+).

The protein belongs to the peptidase M24B family. Bacterial-type prolidase subfamily. Requires Mn(2+) as cofactor.

The catalysed reaction is Xaa-L-Pro dipeptide + H2O = an L-alpha-amino acid + L-proline. Functionally, splits dipeptides with a prolyl residue in the C-terminal position. In Glaesserella parasuis serovar 5 (strain SH0165) (Haemophilus parasuis), this protein is Xaa-Pro dipeptidase.